The chain runs to 1025 residues: Putative calcium-transporting ATPase 11, plasma membrane-type (1025 aa).

At 1–157 (MSNLLKDFEV…NRYTEKPARS (157 aa)) the chain is on the cytoplasmic side. The tract at residues 19–30 (ARQRWRSSVGLV) is interaction with calmodulin. Residues 158–178 (FLTFVWEALQDITLIILMVCA) form a helical membrane-spanning segment. Topologically, residues 179-196 (VVSIGVGVATEGFPKGMY) are lumenal. The chain crosses the membrane as a helical span at residues 197-217 (DGTGILLSIILVVMVTAISDY). Residues 218-345 (KQSLQFRDLD…EDETPLQVKL (128 aa)) lie on the Cytoplasmic side of the membrane. A helical transmembrane segment spans residues 346-365 (NGVATIIGKIGLGFAVLTFV). Residues 366–395 (VLCIRFVVEKATAGSITEWSSEDALTLLDY) are Lumenal-facing. A helical membrane pass occupies residues 396-413 (FAIAVTIIVVAVPEGLPL). Topologically, residues 414–801 (AVTLSLAFAM…KWGRAVYINI (388 aa)) are cytoplasmic. Asp-451 (4-aspartylphosphate intermediate) is an active-site residue. Mg(2+) contacts are provided by Asp-746 and Asp-750. The helical transmembrane segment at 802–820 (QKFVQFQLTVNVVALIINF) threads the bilayer. Over 821 to 831 (VSACITGSAPL) the chain is Lumenal. A helical transmembrane segment spans residues 832–852 (TAVQLLWVNMIMDTLGALALA). The Cytoplasmic segment spans residues 853–872 (TEPPNEGLMKRQPIGRTASF). A helical transmembrane segment spans residues 873–895 (ITRAMWRNIIGQSIYQLIVLGIL). Over 896–907 (NFAGKQILNLNG) the chain is Lumenal. A helical transmembrane segment spans residues 908 to 929 (PDSTIVLNTIIFNSFVFCQVFN). Topologically, residues 930–947 (EVNSREIEKINVFEGMFK) are cytoplasmic. Residues 948–969 (SWVFVAVMTATVGFQVIIVEFL) form a helical membrane-spanning segment. Over 970 to 979 (GAFASTVPLS) the chain is Lumenal. The chain crosses the membrane as a helical span at residues 980 to 1001 (WQHWLLCILIGSVSMILAVGLK). At 1002-1025 (CIPVESNRHHDGYELLPSGPSDSA) the chain is on the cytoplasmic side.

The protein belongs to the cation transport ATPase (P-type) (TC 3.A.3) family. Type IIB subfamily.

It is found in the membrane. The catalysed reaction is Ca(2+)(in) + ATP + H2O = Ca(2+)(out) + ADP + phosphate + H(+). With respect to regulation, activated by calmodulin. Its function is as follows. This magnesium-dependent enzyme catalyzes the hydrolysis of ATP coupled with the translocation of calcium from the cytosol out of the cell or into organelles. In Arabidopsis thaliana (Mouse-ear cress), this protein is Putative calcium-transporting ATPase 11, plasma membrane-type (ACA11).